We begin with the raw amino-acid sequence, 375 residues long: Phytanoyl-CoA hydroxylase-interacting protein-like (375 aa).

A phosphoserine mark is found at S11, S12, and S15. An N-linked (GlcNAc...) asparagine glycan is attached at N22. S24 carries the post-translational modification Phosphoserine. An N-linked (GlcNAc...) asparagine glycan is attached at N36. The Fibronectin type-III domain occupies 51–160 (VPHNIKINNI…EIIEFCTADY (110 aa)).

The protein belongs to the PHYHIP family.

Its function is as follows. May play a role in the development of the central system. In Mus musculus (Mouse), this protein is Phytanoyl-CoA hydroxylase-interacting protein-like (Phyhipl).